A 179-amino-acid polypeptide reads, in one-letter code: Putative 5'(3')-deoxyribonucleotidase (179 aa).

The active-site Nucleophile is Asp9. Positions 9, 11, and 135 each coordinate Mg(2+). Asp11 serves as the catalytic Proton donor.

Belongs to the 5'(3')-deoxyribonucleotidase family. The cofactor is Mg(2+).

Its function is as follows. Dephosphorylates the 5' and 2'(3')-phosphates of deoxyribonucleotides. The sequence is that of Putative 5'(3')-deoxyribonucleotidase from Staphylococcus epidermidis (strain ATCC 35984 / DSM 28319 / BCRC 17069 / CCUG 31568 / BM 3577 / RP62A).